We begin with the raw amino-acid sequence, 550 residues long: CTP synthase (550 aa).

The tract at residues 1 to 271 (MTRYIFITGG…DAEVLDVFGM (271 aa)) is amidoligase domain. Residue S13 participates in CTP binding. S13 provides a ligand contact to UTP. ATP is bound at residue 14–19 (SLGKGL). Y54 is an L-glutamine binding site. D71 is a binding site for ATP. Mg(2+) is bound by residues D71 and E145. CTP is bound by residues 152–154 (DIE), 192–197 (KTKPTQ), and K228. Residues 192–197 (KTKPTQ) and K228 each bind UTP. One can recognise a Glutamine amidotransferase type-1 domain in the interval 297 to 549 (TIAVVGKYTV…IAAAKEQGRL (253 aa)). G361 contributes to the L-glutamine binding site. Residue C388 is the Nucleophile; for glutamine hydrolysis of the active site. L-glutamine is bound by residues 389-392 (FGMQ), E412, and R477. Residues H522 and E524 contribute to the active site.

This sequence belongs to the CTP synthase family. Homotetramer.

It catalyses the reaction UTP + L-glutamine + ATP + H2O = CTP + L-glutamate + ADP + phosphate + 2 H(+). The enzyme catalyses L-glutamine + H2O = L-glutamate + NH4(+). The catalysed reaction is UTP + NH4(+) + ATP = CTP + ADP + phosphate + 2 H(+). It functions in the pathway pyrimidine metabolism; CTP biosynthesis via de novo pathway; CTP from UDP: step 2/2. Allosterically activated by GTP, when glutamine is the substrate; GTP has no effect on the reaction when ammonia is the substrate. The allosteric effector GTP functions by stabilizing the protein conformation that binds the tetrahedral intermediate(s) formed during glutamine hydrolysis. Inhibited by the product CTP, via allosteric rather than competitive inhibition. Its function is as follows. Catalyzes the ATP-dependent amination of UTP to CTP with either L-glutamine or ammonia as the source of nitrogen. Regulates intracellular CTP levels through interactions with the four ribonucleotide triphosphates. This Caulobacter sp. (strain K31) protein is CTP synthase.